The chain runs to 552 residues: 5'-AMP-activated protein kinase catalytic subunit alpha-2 (552 aa).

Positions 16-268 (YVLGDTLGVG…IKDIREHEWF (253 aa)) constitute a Protein kinase domain. ATP is bound by residues 22–30 (LGVGTFGKV) and Lys45. Asp139 acts as the Proton acceptor in catalysis. Residue Thr172 is modified to Phosphothreonine; by LKB1 and CaMKK2. Position 258 is a phosphothreonine (Thr258). An AIS region spans residues 291–376 (EAVKEVCEKF…PERMPPLIAD (86 aa)). A Phosphoserine modification is found at Ser377. The disordered stretch occupies residues 477-521 (VEQRSGSSTPQRSCSAAGLHRPRSSFDSTTAESHSLSGSLTGSLT). Residues 480 to 490 (RSGSSTPQRSC) are compositionally biased toward polar residues. The residue at position 491 (Ser491) is a Phosphoserine. Residues 501-510 (SFDSTTAESH) are compositionally biased toward polar residues. Residues 511-521 (SLSGSLTGSLT) are compositionally biased toward low complexity.

The protein belongs to the protein kinase superfamily. CAMK Ser/Thr protein kinase family. SNF1 subfamily. As to quaternary structure, AMPK is a heterotrimer of an alpha catalytic subunit (PRKAA1 or PRKAA2), a beta (PRKAB1 or PRKAB2) and a gamma non-catalytic subunits (PRKAG1, PRKAG2 or PRKAG3). Interacts with FNIP1 and FNIP2. Associates with internalized insulin receptor/INSR complexes on Golgi/endosomal membranes; PRKAA2/AMPK2 together with ATIC and HACD3/PTPLAD1 is proposed to be part of a signaling network regulating INSR autophosphorylation and endocytosis. Interacts with ARF6. The phosphorylated form at Thr-172 mediated by CamKK2 interacts with ACSS2. Mg(2+) serves as cofactor. In terms of processing, ubiquitinated. Post-translationally, phosphorylated at Thr-172 by STK11/LKB1 in complex with STE20-related adapter-alpha (STRADA) pseudo kinase and CAB39. Also phosphorylated at Thr-172 by CAMKK2; triggered by a rise in intracellular calcium ions, without detectable changes in the AMP/ATP ratio. CAMKK1 can also phosphorylate Thr-172, but at much lower level. Dephosphorylated by protein phosphatase 2A and 2C (PP2A and PP2C). Phosphorylated by ULK1; leading to negatively regulate AMPK activity and suggesting the existence of a regulatory feedback loop between ULK1 and AMPK. Dephosphorylated by PPM1A and PPM1B at Thr-172 (mediated by STK11/LKB1).

It is found in the cytoplasm. It localises to the nucleus. The catalysed reaction is L-seryl-[protein] + ATP = O-phospho-L-seryl-[protein] + ADP + H(+). The enzyme catalyses L-threonyl-[protein] + ATP = O-phospho-L-threonyl-[protein] + ADP + H(+). It carries out the reaction L-seryl-[acetyl-CoA carboxylase] + ATP = O-phospho-L-seryl-[acetyl-CoA carboxylase] + ADP + H(+). It catalyses the reaction L-seryl-[3-hydroxy-3-methylglutaryl-coenzyme A reductase] + ATP = O-phospho-L-seryl-[3-hydroxy-3-methylglutaryl-coenzyme A reductase] + ADP + H(+). Its activity is regulated as follows. Activated by phosphorylation on Thr-172. Binding of AMP to non-catalytic gamma subunit (PRKAG1, PRKAG2 or PRKAG3) results in allosteric activation, inducing phosphorylation on Thr-172. AMP-binding to gamma subunit also sustains activity by preventing dephosphorylation of Thr-172. ADP also stimulates Thr-172 phosphorylation, without stimulating already phosphorylated AMPK. ATP promotes dephosphorylation of Thr-172, rendering the enzyme inactive. Under physiological conditions AMPK mainly exists in its inactive form in complex with ATP, which is much more abundant than AMP. AMPK is activated by antihyperglycemic drug metformin, a drug prescribed to patients with type 2 diabetes: in vivo, metformin seems to mainly inhibit liver gluconeogenesis. However, metformin can be used to activate AMPK in muscle and other cells in culture or ex vivo. Selectively inhibited by compound C (6-[4-(2-Piperidin-1-yl-ethoxy)-phenyl)]-3-pyridin-4-yl-pyyrazolo[1,5-a] pyrimidine. Activated by resveratrol, a natural polyphenol present in red wine, and S17834, a synthetic polyphenol. Salicylate/aspirin directly activates kinase activity, primarily by inhibiting Thr-172 dephosphorylation. Functionally, catalytic subunit of AMP-activated protein kinase (AMPK), an energy sensor protein kinase that plays a key role in regulating cellular energy metabolism. In response to reduction of intracellular ATP levels, AMPK activates energy-producing pathways and inhibits energy-consuming processes: inhibits protein, carbohydrate and lipid biosynthesis, as well as cell growth and proliferation. AMPK acts via direct phosphorylation of metabolic enzymes, and by longer-term effects via phosphorylation of transcription regulators. Regulates lipid synthesis by phosphorylating and inactivating lipid metabolic enzymes such as ACACA, ACACB, GYS1, HMGCR and LIPE; regulates fatty acid and cholesterol synthesis by phosphorylating acetyl-CoA carboxylase (ACACA and ACACB) and hormone-sensitive lipase (LIPE) enzymes, respectively. Promotes lipolysis of lipid droplets by mediating phosphorylation of isoform 1 of CHKA (CHKalpha2). Regulates insulin-signaling and glycolysis by phosphorylating IRS1, PFKFB2 and PFKFB3. Involved in insulin receptor/INSR internalization. AMPK stimulates glucose uptake in muscle by increasing the translocation of the glucose transporter SLC2A4/GLUT4 to the plasma membrane, possibly by mediating phosphorylation of TBC1D4/AS160. Regulates transcription and chromatin structure by phosphorylating transcription regulators involved in energy metabolism such as CRTC2/TORC2, FOXO3, histone H2B, HDAC5, MEF2C, MLXIPL/ChREBP, EP300, HNF4A, p53/TP53, SREBF1, SREBF2 and PPARGC1A. Acts as a key regulator of glucose homeostasis in liver by phosphorylating CRTC2/TORC2, leading to CRTC2/TORC2 sequestration in the cytoplasm. In response to stress, phosphorylates 'Ser-36' of histone H2B (H2BS36ph), leading to promote transcription. Acts as a key regulator of cell growth and proliferation by phosphorylating FNIP1, TSC2, RPTOR, WDR24 and ATG1/ULK1: in response to nutrient limitation, negatively regulates the mTORC1 complex by phosphorylating RPTOR component of the mTORC1 complex and by phosphorylating and activating TSC2. Also phosphorylates and inhibits GATOR2 subunit WDR24 in response to nutrient limitation, leading to suppress glucose-mediated mTORC1 activation. In response to energetic stress, phosphorylates FNIP1, inactivating the non-canonical mTORC1 signaling, thereby promoting nuclear translocation of TFEB and TFE3, and inducing transcription of lysosomal or autophagy genes. In response to nutrient limitation, promotes autophagy by phosphorylating and activating ATG1/ULK1. In that process, it also activates WDR45/WIPI4. Phosphorylates CASP6, thereby preventing its autoprocessing and subsequent activation. AMPK also acts as a regulator of circadian rhythm by mediating phosphorylation of CRY1, leading to destabilize it. May regulate the Wnt signaling pathway by phosphorylating CTNNB1, leading to stabilize it. Also acts as a regulator of cellular polarity by remodeling the actin cytoskeleton; probably by indirectly activating myosin. Also phosphorylates CFTR, EEF2K, KLC1, NOS3 and SLC12A1. Plays an important role in the differential regulation of pro-autophagy (composed of PIK3C3, BECN1, PIK3R4 and UVRAG or ATG14) and non-autophagy (composed of PIK3C3, BECN1 and PIK3R4) complexes, in response to glucose starvation. Can inhibit the non-autophagy complex by phosphorylating PIK3C3 and can activate the pro-autophagy complex by phosphorylating BECN1. Upon glucose starvation, promotes ARF6 activation in a kinase-independent manner leading to cell migration. Upon glucose deprivation mediates the phosphorylation of ACSS2 at 'Ser-659', which exposes the nuclear localization signal of ACSS2, required for its interaction with KPNA1 and nuclear translocation. Upon stress, regulates mitochondrial fragmentation through phosphorylation of MTFR1L. This is 5'-AMP-activated protein kinase catalytic subunit alpha-2 from Homo sapiens (Human).